A 733-amino-acid chain; its full sequence is 1,4-alpha-glucan branching enzyme GlgB (733 aa).

The active-site Nucleophile is the Asp409. The active-site Proton donor is Glu462.

It belongs to the glycosyl hydrolase 13 family. GlgB subfamily. Monomer.

It catalyses the reaction Transfers a segment of a (1-&gt;4)-alpha-D-glucan chain to a primary hydroxy group in a similar glucan chain.. It participates in glycan biosynthesis; glycogen biosynthesis. Functionally, catalyzes the formation of the alpha-1,6-glucosidic linkages in glycogen by scission of a 1,4-alpha-linked oligosaccharide from growing alpha-1,4-glucan chains and the subsequent attachment of the oligosaccharide to the alpha-1,6 position. In Gloeobacter violaceus (strain ATCC 29082 / PCC 7421), this protein is 1,4-alpha-glucan branching enzyme GlgB.